We begin with the raw amino-acid sequence, 493 residues long: Cholesteryl ester transfer protein (493 aa).

The first 17 residues, 1–17, serve as a signal peptide directing secretion; it reads MLAATVLTLALLGNAHA. N-linked (GlcNAc...) (complex) asparagine glycosylation occurs at Asn105. A disulfide bridge connects residues Cys160 and Cys201. N-linked (GlcNAc...) asparagine glycans are attached at residues Asn257, Asn358, and Asn413.

It belongs to the BPI/LBP/Plunc superfamily. BPI/LBP family. As to expression, expressed by the liver and secreted in plasma.

It is found in the secreted. The catalysed reaction is cholesteryl (9Z-octadecenoate)(in) = cholesteryl (9Z-octadecenoate)(out). It carries out the reaction 1,2,3-tri-(9Z-octadecenoyl)-glycerol(in) = 1,2,3-tri-(9Z-octadecenoyl)-glycerol(out). It catalyses the reaction cholesteryl (9Z,12Z)-octadecadienoate(in) = cholesteryl (9Z,12Z)-octadecadienoate(out). In terms of biological role, involved in the transfer of neutral lipids, including cholesteryl ester and triglyceride, among lipoprotein particles. Allows the net movement of cholesteryl ester from high density lipoproteins/HDL to triglyceride-rich very low density lipoproteins/VLDL, and the equimolar transport of triglyceride from VLDL to HDL. Regulates the reverse cholesterol transport, by which excess cholesterol is removed from peripheral tissues and returned to the liver for elimination. The protein is Cholesteryl ester transfer protein of Homo sapiens (Human).